Consider the following 534-residue polypeptide: Glycerophosphodiester transporter GIT2 (534 aa).

A run of 12 helical transmembrane segments spans residues 63-83 (GAGL…MACL), 96-116 (AISN…LSFG), 135-155 (LIAF…QGFF), 163-183 (FCLG…ASEF), 202-222 (FMID…LWIF), 230-250 (LWRV…FIRL), 289-309 (MIWF…AIIL), 322-342 (WGWS…GAFS), 350-370 (LTLA…SACL), 377-397 (VAAF…GPGG), 417-437 (GIAA…FPAI), and 453-473 (VPFY…FFLC).

Belongs to the major facilitator superfamily. Sugar transporter (TC 2.A.1.1) family.

It is found in the cell membrane. Functionally, probable glycerophosphodiester transporter. Does not possess detectable glycerophosphoinositol (GroPIns) transport activity. Might be involved in the uptake of glycerophosphocholine (GroPCho). The expanded ability to utilize GroPIns and GroPCho results from the organism's pathogenic nature and its need to occupy a variety of environments within its host organism. This possibility is buttressed by the fact that GroPIns and GroPCho are present and abundant in human fluids. This is Glycerophosphodiester transporter GIT2 from Candida albicans (strain SC5314 / ATCC MYA-2876) (Yeast).